The following is a 240-amino-acid chain: MAASRTRSWLRRTGGVLMALLCLFLIYELAMFSMVVWYAHRDPGSSAIMREEISRLRETDPKAQLSYTWVPYDRINVTLKRAVIASEDANFTEHDGVEWDAIRKAWAYNQNQQAQGRATIRGGSTITQQLAKNLFLSGSRSYLRKGQELILTYMIEHVMSKERILELYLNIAEWGVGIFGAEAAARHYYGISAANLNASQSARLAAMLPNPRYYDKHRSTRYLNSRTAILLRRMRMVDIP.

The chain crosses the membrane as a helical span at residues Val-16 to Val-36.

Belongs to the glycosyltransferase 51 family.

It is found in the cell inner membrane. The catalysed reaction is [GlcNAc-(1-&gt;4)-Mur2Ac(oyl-L-Ala-gamma-D-Glu-L-Lys-D-Ala-D-Ala)](n)-di-trans,octa-cis-undecaprenyl diphosphate + beta-D-GlcNAc-(1-&gt;4)-Mur2Ac(oyl-L-Ala-gamma-D-Glu-L-Lys-D-Ala-D-Ala)-di-trans,octa-cis-undecaprenyl diphosphate = [GlcNAc-(1-&gt;4)-Mur2Ac(oyl-L-Ala-gamma-D-Glu-L-Lys-D-Ala-D-Ala)](n+1)-di-trans,octa-cis-undecaprenyl diphosphate + di-trans,octa-cis-undecaprenyl diphosphate + H(+). It participates in cell wall biogenesis; peptidoglycan biosynthesis. In terms of biological role, peptidoglycan polymerase that catalyzes glycan chain elongation from lipid-linked precursors. This is Biosynthetic peptidoglycan transglycosylase from Bordetella avium (strain 197N).